The primary structure comprises 473 residues: Monocarboxylate transporter 4 (473 aa).

Residues 1 to 17 (MGAVVVDDGPSGVKAPD) lie on the Cytoplasmic side of the membrane. The helical transmembrane segment at 18 to 38 (GGWGWAVLFGCFIITGFSYAF) threads the bilayer. Residues 39–61 (PKAVSVFFKELIREFGVGYSDTA) lie on the Extracellular side of the membrane. Residues 62–82 (WISSILLAMLYGTGPLCSVCV) traverse the membrane as a helical segment. Residues 83 to 91 (NRFGCRPVM) are Cytoplasmic-facing. The helical transmembrane segment at 92 to 112 (LVGGLFASMGMVIASFCTSIV) threads the bilayer. Residues 113–115 (QIY) are Extracellular-facing. A helical membrane pass occupies residues 116 to 136 (LTAGVITGLGLALNFQPSLIM). Residues 137-149 (LNRYFDKRRPLAN) lie on the Cytoplasmic side of the membrane. Residues 150–170 (GLSAAGSPVFLCALSPLGQIL) form a helical membrane-spanning segment. Topologically, residues 171–179 (QHEYGWRGG) are extracellular. A helical membrane pass occupies residues 180–200 (FLILGGMLLNCCVCGALMRPL). The Cytoplasmic segment spans residues 201–231 (EPPKKSEATKEPAEKKAKKKLLDFSVFKDGG). Residues 232–252 (FVIYTLAASIMVLGLFVPPVF) traverse the membrane as a helical segment. Residues 253–268 (VVSYAKDLGYQDTKAA) are Extracellular-facing. A helical transmembrane segment spans residues 269–289 (FLLTILGFIDIFARPICGMVA). At 290-297 (GLKWVRPR) the chain is on the cytoplasmic side. A helical membrane pass occupies residues 298 to 318 (CVYLFSFAMIFNGFTDLMGSM). Topologically, residues 319–321 (SVD) are extracellular. A helical transmembrane segment spans residues 322–342 (YGGLVVFCIFFGISYGMVGAL). Residues 343 to 358 (QFEVLMAIVGTQKFSS) are Cytoplasmic-facing. A helical membrane pass occupies residues 359–379 (AIGLVLLAEAMAVLIGPPSAG). Over 380 to 388 (KLLDLTRRY) the chain is Extracellular. Residues 389–409 (MFVFIIAGIEVTTSALVLALG) form a helical membrane-spanning segment. Residues 410-473 (NFFCIKKKPA…EVVTNPETCV (64 aa)) are Cytoplasmic-facing. The tract at residues 421–447 (PHTKEAAAEREELNKSEDKTPEDAKVD) is disordered. Basolateral sorting signal regions lie at residues 427 to 449 (AAER…VDSI) and 449 to 473 (IEVE…ETCV).

Belongs to the major facilitator superfamily. Monocarboxylate porter (TC 2.A.1.13) family. In terms of assembly, interacts with BSG; interaction mediates SLC16A3 targeting to the plasma membrane.

The protein resides in the cell membrane. It is found in the basolateral cell membrane. It carries out the reaction (S)-lactate(in) + H(+)(in) = (S)-lactate(out) + H(+)(out). It catalyses the reaction pyruvate(out) + H(+)(out) = pyruvate(in) + H(+)(in). Proton-dependent transporter of monocarboxylates such as L-lactate and pyruvate. Plays a predominant role in the L-lactate efflux from highly glycolytic cells. This Gallus gallus (Chicken) protein is Monocarboxylate transporter 4 (SLC16A3).